Consider the following 395-residue polypeptide: Chaperone protein DnaJ (395 aa).

In terms of domain architecture, J spans 4–69 (DYYEVLGLSR…DKRRRYDQFG (66 aa)). The CR-type zinc finger occupies 151-232 (GVEKTLKIKK…CYGEGIKQGE (82 aa)). Zn(2+) contacts are provided by cysteine 164, cysteine 167, cysteine 180, cysteine 183, cysteine 206, cysteine 209, cysteine 220, and cysteine 223. CXXCXGXG motif repeat units lie at residues 164–171 (CTECNGTG), 180–187 (CPTCHGSG), 206–213 (CPTCGGEG), and 220–227 (CVSCYGEG).

This sequence belongs to the DnaJ family. As to quaternary structure, homodimer. Requires Zn(2+) as cofactor.

The protein resides in the cytoplasm. Its function is as follows. Participates actively in the response to hyperosmotic and heat shock by preventing the aggregation of stress-denatured proteins and by disaggregating proteins, also in an autonomous, DnaK-independent fashion. Unfolded proteins bind initially to DnaJ; upon interaction with the DnaJ-bound protein, DnaK hydrolyzes its bound ATP, resulting in the formation of a stable complex. GrpE releases ADP from DnaK; ATP binding to DnaK triggers the release of the substrate protein, thus completing the reaction cycle. Several rounds of ATP-dependent interactions between DnaJ, DnaK and GrpE are required for fully efficient folding. Also involved, together with DnaK and GrpE, in the DNA replication of plasmids through activation of initiation proteins. In Chlorobium phaeobacteroides (strain DSM 266 / SMG 266 / 2430), this protein is Chaperone protein DnaJ.